A 421-amino-acid polypeptide reads, in one-letter code: Synaptotagmin-1 (421 aa).

Positions 1-40 are disordered; sequence MVSESHHEALAAPPATTVAAAPPSNVTEPASPGGGGGKED. Residues 1–60 lie on the Vesicular side of the membrane; that stretch reads MVSESHHEALAAPPATTVAAAPPSNVTEPASPGGGGGKEDAFSKLKEKFMNELNKIPLPP. The span at 10–23 shows a compositional bias: low complexity; it reads LAAPPATTVAAAPP. An N-linked (GlcNAc...) asparagine glycan is attached at N25. The helical transmembrane segment at 61–81 threads the bilayer; that stretch reads WALIAIAIVAVLLILTCCFCL. Residues C77, C78, C80, C82, and C85 are each lipidated (S-palmitoyl cysteine). Over 82–421 the chain is Cytoplasmic; that stretch reads CKKCLFKKKN…EVDAMLAVKK (340 aa). Residues 94–139 are disordered; that stretch reads KGKEKGGKNAINMKDVKDLGKTMKDQDDDAETGLTDGEEKEEPKEV. Residues 107–118 show a composition bias toward basic and acidic residues; it reads KDVKDLGKTMKD. Acidic residues predominate over residues 119–133; the sequence is QDDDAETGLTDGEEK. Residues 135 to 381 are phospholipid binding; the sequence is EPKEVEKLGK…AIGKVFVGYN (247 aa). 2 C2 domains span residues 141–260 and 272–405; these read KLGK…EEWR and KLGD…AQWH. Ca(2+)-binding residues include L171, D172, D178, D230, F231, D232, S235, K236, D238, D303, D309, D363, D365, and D371.

Belongs to the synaptotagmin family. In terms of assembly, homotetramer. The cofactor is Ca(2+).

Its subcellular location is the cytoplasmic vesicle. It localises to the secretory vesicle membrane. The protein localises to the secretory vesicle. The protein resides in the synaptic vesicle membrane. It is found in the chromaffin granule membrane. Its subcellular location is the cytoplasm. Functionally, calcium sensor that participates in triggering neurotransmitter release at the synapse. May have a regulatory role in the membrane interactions during trafficking of synaptic vesicles at the active zone of the synapse. It binds acidic phospholipids with a specificity that requires the presence of both an acidic head group and a diacyl backbone. May play a role in dendrite formation by melanocytes. May play a role in regulating the secretion of hormones relevant to the reproduction and egg-laying of female geese. The protein is Synaptotagmin-1 of Anser cygnoides (Swan goose).